Reading from the N-terminus, the 213-residue chain is Nucleolar protein 12 (213 aa).

A coiled-coil region spans residues 33–96; that stretch reads GFHKRKVERK…RLVTAKTESV (64 aa). The segment at 109-213 is disordered; sequence TISDLDLSGA…LTGKAQHSRE (105 aa). Residues 130 to 139 show a composition bias toward acidic residues; that stretch reads AGDESEEEAS. Residues 170–182 are compositionally biased toward basic residues; sequence AHSRKKVKRKHPR.

The protein belongs to the RRP17 family. Interacts with KIAA1191.

It localises to the nucleus. It is found in the nucleolus. The protein localises to the cytoplasm. In terms of biological role, multifunctional RNA binding protein that plays a role in RNA metabolism and DNA maintenance. Participates in the resolution of DNA stress and the maintenance of genome integrity by localizing to sites of DNA insults. Also plays a role in proper nucleolar organization by limiting nucleolar size and regulating nucleolar number. Mechanistically, regulates the nucleolar levels of fibrillarin and nucleolin, two key players in pre-rRNA processing and ribosome assembly. The sequence is that of Nucleolar protein 12 (NOL12) from Pongo abelii (Sumatran orangutan).